A 100-amino-acid polypeptide reads, in one-letter code: Apolipoprotein C-II (100 aa).

The signal sequence occupies residues 1-22 (MGSRFLLALFLVLLVLGCEVQA). The tract at residues 66 to 74 (SVDEKLRDM) is lipid binding. Residues 78–100 (SSAAMTTYASIFTDQIFTLLKGE) are lipoprotein lipase cofactor.

The protein belongs to the apolipoprotein C2 family. Proapolipoprotein C-II is synthesized as a sialic acid containing glycoprotein which is subsequently desialylated prior to its proteolytic processing. Post-translationally, proapolipoprotein C-II, the major form found in plasma undergoes proteolytic cleavage of its N-terminal hexapeptide to generate the mature form apolipoprotein C-II, which occurs as the minor form in plasma.

Its subcellular location is the secreted. Component of chylomicrons, very low-density lipoproteins (VLDL), low-density lipoproteins (LDL), and high-density lipoproteins (HDL) in plasma. Plays an important role in lipoprotein metabolism as an activator of lipoprotein lipase. The chain is Apolipoprotein C-II (APOC2) from Bramus lutescens (Transcaucasian mole vole).